Consider the following 598-residue polypeptide: Elongation factor 4 (598 aa).

A tr-type G domain is found at 2-184 (QHIRNFSIIA…AIVARVPAPK (183 aa)). GTP-binding positions include 14 to 19 (DHGKST) and 131 to 134 (NKID).

The protein belongs to the TRAFAC class translation factor GTPase superfamily. Classic translation factor GTPase family. LepA subfamily.

Its subcellular location is the cell inner membrane. The enzyme catalyses GTP + H2O = GDP + phosphate + H(+). Functionally, required for accurate and efficient protein synthesis under certain stress conditions. May act as a fidelity factor of the translation reaction, by catalyzing a one-codon backward translocation of tRNAs on improperly translocated ribosomes. Back-translocation proceeds from a post-translocation (POST) complex to a pre-translocation (PRE) complex, thus giving elongation factor G a second chance to translocate the tRNAs correctly. Binds to ribosomes in a GTP-dependent manner. This Azoarcus sp. (strain BH72) protein is Elongation factor 4.